We begin with the raw amino-acid sequence, 236 residues long: 1-(5-phosphoribosyl)-5-[(5-phosphoribosylamino)methylideneamino] imidazole-4-carboxamide isomerase (236 aa).

Aspartate 8 serves as the catalytic Proton acceptor. The active-site Proton donor is the aspartate 129.

It belongs to the HisA/HisF family.

The protein resides in the cytoplasm. The catalysed reaction is 1-(5-phospho-beta-D-ribosyl)-5-[(5-phospho-beta-D-ribosylamino)methylideneamino]imidazole-4-carboxamide = 5-[(5-phospho-1-deoxy-D-ribulos-1-ylimino)methylamino]-1-(5-phospho-beta-D-ribosyl)imidazole-4-carboxamide. It functions in the pathway amino-acid biosynthesis; L-histidine biosynthesis; L-histidine from 5-phospho-alpha-D-ribose 1-diphosphate: step 4/9. The polypeptide is 1-(5-phosphoribosyl)-5-[(5-phosphoribosylamino)methylideneamino] imidazole-4-carboxamide isomerase (Ruminiclostridium cellulolyticum (strain ATCC 35319 / DSM 5812 / JCM 6584 / H10) (Clostridium cellulolyticum)).